The sequence spans 123 residues: Small ribosomal subunit protein uS12 (123 aa).

D89 carries the 3-methylthioaspartic acid modification. The segment at 101–123 is disordered; that stretch reads SLDTSGVKDRKQGRSKYGAKRPK. The segment covering 113-123 has biased composition (basic residues); it reads GRSKYGAKRPK.

It belongs to the universal ribosomal protein uS12 family. Part of the 30S ribosomal subunit. Contacts proteins S8 and S17. May interact with IF1 in the 30S initiation complex.

In terms of biological role, with S4 and S5 plays an important role in translational accuracy. Functionally, interacts with and stabilizes bases of the 16S rRNA that are involved in tRNA selection in the A site and with the mRNA backbone. Located at the interface of the 30S and 50S subunits, it traverses the body of the 30S subunit contacting proteins on the other side and probably holding the rRNA structure together. The combined cluster of proteins S8, S12 and S17 appears to hold together the shoulder and platform of the 30S subunit. The chain is Small ribosomal subunit protein uS12 from Stutzerimonas stutzeri (strain A1501) (Pseudomonas stutzeri).